Reading from the N-terminus, the 147-residue chain is NADH-quinone oxidoreductase subunit A (147 aa).

Helical transmembrane passes span 11-31 (IWPLVAYFFLVVMLVVGVMAL), 68-88 (LIAVFFVIFDVEAVFLFAWAV), and 93-113 (LGWPGYIEAIIFISILGAALA).

The protein belongs to the complex I subunit 3 family. As to quaternary structure, NDH-1 is composed of 14 different subunits. Subunits NuoA, H, J, K, L, M, N constitute the membrane sector of the complex.

The protein resides in the cell inner membrane. The enzyme catalyses a quinone + NADH + 5 H(+)(in) = a quinol + NAD(+) + 4 H(+)(out). In terms of biological role, NDH-1 shuttles electrons from NADH, via FMN and iron-sulfur (Fe-S) centers, to quinones in the respiratory chain. The immediate electron acceptor for the enzyme in this species is believed to be ubiquinone. Couples the redox reaction to proton translocation (for every two electrons transferred, four hydrogen ions are translocated across the cytoplasmic membrane), and thus conserves the redox energy in a proton gradient. The polypeptide is NADH-quinone oxidoreductase subunit A (Nitrosospira multiformis (strain ATCC 25196 / NCIMB 11849 / C 71)).